Reading from the N-terminus, the 436-residue chain is 3-ketoacyl-CoA thiolase (436 aa).

The Acyl-thioester intermediate role is filled by cysteine 99. Active-site proton acceptor residues include histidine 392 and cysteine 422.

The protein belongs to the thiolase-like superfamily. Thiolase family. Heterotetramer of two alpha chains (FadJ) and two beta chains (FadI).

The protein resides in the cytoplasm. The catalysed reaction is an acyl-CoA + acetyl-CoA = a 3-oxoacyl-CoA + CoA. It participates in lipid metabolism; fatty acid beta-oxidation. In terms of biological role, catalyzes the final step of fatty acid oxidation in which acetyl-CoA is released and the CoA ester of a fatty acid two carbons shorter is formed. The sequence is that of 3-ketoacyl-CoA thiolase from Shewanella oneidensis (strain ATCC 700550 / JCM 31522 / CIP 106686 / LMG 19005 / NCIMB 14063 / MR-1).